The sequence spans 297 residues: Phosphoribosylaminoimidazole-succinocarboxamide synthase (297 aa).

It belongs to the SAICAR synthetase family.

It catalyses the reaction 5-amino-1-(5-phospho-D-ribosyl)imidazole-4-carboxylate + L-aspartate + ATP = (2S)-2-[5-amino-1-(5-phospho-beta-D-ribosyl)imidazole-4-carboxamido]succinate + ADP + phosphate + 2 H(+). The protein operates within purine metabolism; IMP biosynthesis via de novo pathway; 5-amino-1-(5-phospho-D-ribosyl)imidazole-4-carboxamide from 5-amino-1-(5-phospho-D-ribosyl)imidazole-4-carboxylate: step 1/2. The sequence is that of Phosphoribosylaminoimidazole-succinocarboxamide synthase from Rhodococcus erythropolis (strain PR4 / NBRC 100887).